A 57-amino-acid chain; its full sequence is Mambalgin-3 (57 aa).

4 cysteine pairs are disulfide-bonded: C3–C19, C12–C37, C41–C49, and C50–C55.

The protein belongs to the three-finger toxin family. Short-chain subfamily. Mambalgin sub-subfamily. In terms of tissue distribution, expressed by the venom gland.

Its subcellular location is the secreted. This three-finger toxin inhibits ASIC channels. It acts as a gating modifier toxin by decreasing the apparent proton sensitivity of activation and by slightly increasing the apparent proton sensitivity for inactivation. It binds more tightly to the closed state and to a much lesser extent the inactivated/desensitized state of ASIC1a. It interacts directly with the outside surface of the thumb domain of chicken ASIC1a (ASIC1a), but does not insert into the acidic pocket as suggested previously. This binding leads to relocation of the thumb domain that could disrupt the acidic pocket of cASIC1a. The peptide exerts both stimulatory and inhibitory effects on ASIC1a. It reversibly inhibits rASIC1a (IC(50)=17 nM), rASIC1b (IC(50)= 44 nM) and rASIC1a-rASIC2a (IC(50)=252 nM) channels. In vivo, it shows a potent naloxone-resistant analgesic effect against acute and inflammatory pain upon central and peripheral injection. In addition, it also has an opioid-independent effect on both thermal and mechanical inflammatory pain after systemic administration and is effective against neuropathic pain. This chain is Mambalgin-3, found in Dendroaspis angusticeps (Eastern green mamba).